A 412-amino-acid chain; its full sequence is NF-kappa-B essential modulator (412 aa).

Positions 1-48 are disordered; sequence MSRHLWKNQLSEMVQPSGGPAEDQDMLGEESSLGKPAMLHLPSEQGTP. The interval 1 to 197 is required for interaction with and ubiquitination by MARCHF2; that stretch reads MSRHLWKNQL…REVLQQQHSV (197 aa). A phosphoserine; by IKKB mark is found at Ser-31 and Ser-43. The interval 44-111 is interaction with CHUK/IKBKB; the sequence is EQGTPETLQR…KLVERLSLEK (68 aa). Residues 49-343 adopt a coiled-coil conformation; that stretch reads ETLQRCLEEN…NKLKVGCHES (295 aa). Phosphoserine is present on Ser-68. Position 85 is a phosphoserine; by ATM (Ser-85). Glycyl lysine isopeptide (Lys-Gly) (interchain with G-Cter in ubiquitin) cross-links involve residues Lys-111, Lys-139, Lys-143, Lys-226, and Lys-246. The tract at residues 150-250 is interaction with TANK; sequence LGELQESQSR…YDSHIKSSKG (101 aa). Residues 242–343 form a ubiquitin-binding (UBAN) region; sequence DSHIKSSKGM…NKLKVGCHES (102 aa). The self-association stretch occupies residues 246-358; it reads KSSKGMQLED…MRKRHVETSQ (113 aa). Positions 249-412 are required for interaction with TNFAIP3; the sequence is KGMQLEDLRQ…LQIHVMECIE (164 aa). A Glycyl lysine isopeptide (Lys-Gly) (interchain with G-Cter in SUMO); alternate cross-link involves residue Lys-270. Lys-270 is covalently cross-linked (Glycyl lysine isopeptide (Lys-Gly) (interchain with G-Cter in ubiquitin); alternate). Residues Lys-276, Lys-278, Lys-285, and Lys-295 each participate in a glycyl lysine isopeptide (Lys-Gly) (interchain with G-Cter in ubiquitin) cross-link. Residue Lys-302 forms a Glycyl lysine isopeptide (Lys-Gly) (interchain with G-Cter in SUMO); alternate linkage. Residue Lys-302 forms a Glycyl lysine isopeptide (Lys-Gly) (interchain with G-Cter in ubiquitin); alternate linkage. Glycyl lysine isopeptide (Lys-Gly) (interchain with G-Cter in ubiquitin) cross-links involve residues Lys-314 and Lys-319. Residues 315–336 form a leucine-zipper region; that stretch reads LVERKELLQEQLEQLQREFNKL. Ser-369 is modified (phosphoserine; by IKKB). The interaction with CYLD stretch occupies residues 375–412; that stretch reads SNQRRSPPEEPPDFCCPKCQYQAPDMDTLQIHVMECIE. Ser-380 is subject to Phosphoserine. Residues 382-412 form a CCHC NOA-type zinc finger; it reads PEEPPDFCCPKCQYQAPDMDTLQIHVMECIE. Residue Cys-390 coordinates Zn(2+). A Glycyl lysine isopeptide (Lys-Gly) (interchain with G-Cter in ubiquitin) cross-link involves residue Lys-392. Cys-393, His-406, and Cys-410 together coordinate Zn(2+).

Homodimer; disulfide-linked. Component of the I-kappa-B-kinase (IKK) core complex consisting of CHUK, IKBKB and IKBKG; probably four alpha/CHUK-beta/IKBKB dimers are associated with four gamma/IKBKG subunits. The IKK core complex seems to associate with regulatory or adapter proteins to form a IKK-signalosome holo-complex. The IKK complex associates with TERF2IP/RAP1, leading to promote IKK-mediated phosphorylation of RELA/p65. Part of a complex composed of NCOA2, NCOA3, CHUK/IKKA, IKBKB, IKBKG and CREBBP. Interacts with COPS3, CYLD, NALP2, TRPC4AP and PIDD1. Interacts with ATM; the complex is exported from the nucleus. Interacts with TRAF6. Interacts with IKBKE. Interacts with TANK; the interaction is enhanced by IKBKE and TBK1. Part of a ternary complex consisting of TANK, IKBKB and IKBKG. Interacts with ZFAND5. Interacts with RIPK2. Interacts with TNIP1 and TNFAIP3; TNIP1 facilitates the TNFAIP3-mediated de-ubiquitination of IKBKG. Interacts with TNFAIP3; the interaction is induced by TNF stimulation and by polyubiquitin. Binds (via UBAN region) polyubiquitin; binds both 'Lys-63'-linked and linear polyubiquitin, with higher affinity for linear ubiquitin. Interacts with NLRP10. Interacts with TANK; this interaction increases in response to DNA damage. Interacts with USP10; this interaction increases in response to DNA damage. Interacts with ZC3H12A; this interaction increases in response to DNA damage. Interacts with IFIT5; the interaction synergizes the recruitment of IKK to MAP3K7 and enhances IKK phosphorylation. Interacts with TRIM29; this interaction induces IKBKG/NEMO ubiquitination and proteolytic degradation. Interacts with TRIM13; this interaction leads to IKBKG/NEMO ubiquitination. Interacts with ARFIP2. Interacts with RIPK1. Interacts with (ubiquitinated) BCL10; interaction with polyubiquitinated BCL10 via both 'Lys-63'-linked and linear ubiquitin is required for TCR-induced NF-kappa-B activation. Interacts with MARCHF2; during the late stages of macrophage viral and bacterial infection; the interaction leads to ubiquitination and degradation of IKBKG/NEMO. Post-translationally, phosphorylation at Ser-68 attenuates aminoterminal homodimerization. In terms of processing, polyubiquitinated on Lys-278 via 'Lys-63'-linked ubiquitin; the ubiquitination is mediated downstream of NOD2 and RIPK2 and probably plays a role in signaling by facilitating interactions with ubiquitin domain-containing proteins and activates the NF-kappa-B pathway. Polyubiquitinated on Lys-278 and Lys-302 through 'Lys-63'-linked ubiquitin; the ubiquitination is mediated by BCL10, MALT1 and TRAF6 and probably plays a role in signaling by facilitating interactions with ubiquitin domain-containing proteins and activates the NF-kappa-B pathway. Monoubiquitinated on Lys-270 and Lys-302; promotes nuclear export. Polyubiquitinated through 'Lys-27' by TRIM23; involved in antiviral innate and inflammatory responses. Linear polyubiquitinated on Lys-111, Lys-143, Lys-226, Lys-246, Lys-270, Lys-278, Lys-285, Lys-295, Lys-302 and Lys-319; the head-to-tail polyubiquitination is mediated by the LUBAC complex and plays a key role in NF-kappa-B activation. Deubiquitinated by USP10 in a TANK-dependent and -independent manner, leading to the negative regulation of NF-kappa-B signaling upon DNA damage. Ubiquitinated at Lys-319 by MARCHF2 following bacterial and viral infection which leads to its degradation. Polyubiquitinated via 'Lys-29'-linked ubiquitin; leading to lysosomal degradation. Sumoylated on Lys-270 and Lys-302 with SUMO1; the modification results in phosphorylation of Ser-85 by ATM leading to a replacement of the sumoylation by mono-ubiquitination on these residues. Post-translationally, neddylated by TRIM40, resulting in stabilization of NFKBIA and down-regulation of NF-kappa-B activity.

The protein localises to the cytoplasm. The protein resides in the nucleus. Its function is as follows. Regulatory subunit of the IKK core complex which phosphorylates inhibitors of NF-kappa-B thus leading to the dissociation of the inhibitor/NF-kappa-B complex and ultimately the degradation of the inhibitor. Its binding to scaffolding polyubiquitin plays a key role in IKK activation by multiple signaling receptor pathways. Can recognize and bind both 'Lys-63'-linked and linear polyubiquitin upon cell stimulation, with a much highr affinity for linear polyubiquitin. Could be implicated in NF-kappa-B-mediated protection from cytokine toxicity. Essential for viral activation of IRF3. Involved in TLR3- and IFIH1-mediated antiviral innate response; this function requires 'Lys-27'-linked polyubiquitination. This chain is NF-kappa-B essential modulator (Ikbkg), found in Rattus norvegicus (Rat).